The chain runs to 317 residues: tRNA N6-adenosine threonylcarbamoyltransferase (317 aa).

Positions 110 and 114 each coordinate Fe cation. Residues 132–136, Asp-165, Gly-178, Asp-182, and Asn-271 contribute to the substrate site; that span reads VVSGG. Asp-300 provides a ligand contact to Fe cation.

This sequence belongs to the KAE1 / TsaD family. Fe(2+) is required as a cofactor.

Its subcellular location is the cytoplasm. The catalysed reaction is L-threonylcarbamoyladenylate + adenosine(37) in tRNA = N(6)-L-threonylcarbamoyladenosine(37) in tRNA + AMP + H(+). Required for the formation of a threonylcarbamoyl group on adenosine at position 37 (t(6)A37) in tRNAs that read codons beginning with adenine. Is involved in the transfer of the threonylcarbamoyl moiety of threonylcarbamoyl-AMP (TC-AMP) to the N6 group of A37, together with TsaE and TsaB. TsaD likely plays a direct catalytic role in this reaction. The sequence is that of tRNA N6-adenosine threonylcarbamoyltransferase from Mesoplasma florum (strain ATCC 33453 / NBRC 100688 / NCTC 11704 / L1) (Acholeplasma florum).